We begin with the raw amino-acid sequence, 165 residues long: Disulfide bond formation protein B (165 aa).

At 1–11 the chain is on the cytoplasmic side; the sequence is MICSKVPVRAW. A helical transmembrane segment spans residues 12 to 28; the sequence is FATLGLGCLGLVAVGMA. Topologically, residues 29 to 46 are periplasmic; it reads LQTLLHLAPCPLCIFQRL. Cysteine 38 and cysteine 41 are disulfide-bonded. The helical transmembrane segment at 47–61 threads the bilayer; that stretch reads LYIMIGFVGLLGFVL. Over 62–66 the chain is Cytoplasmic; the sequence is PAGRL. Residues 67–84 traverse the membrane as a helical segment; it reads LWSTLAAGLGVLGFGVAA. Topologically, residues 85 to 142 are periplasmic; sequence YQTWMQAFPDLAPECGFTDPNAIERLVDWLGMEWPSMFLATGFCTSRDWELLGLSMAN. Cysteines 99 and 128 form a disulfide. The helical transmembrane segment at 143–161 threads the bilayer; the sequence is WSVLIFAGIVAYAVLLFVR. Residues 162–165 are Cytoplasmic-facing; sequence KDRA.

The protein belongs to the DsbB family.

The protein localises to the cell inner membrane. In terms of biological role, required for disulfide bond formation in some periplasmic proteins. Acts by oxidizing the DsbA protein. The chain is Disulfide bond formation protein B from Dechloromonas aromatica (strain RCB).